A 328-amino-acid polypeptide reads, in one-letter code: DhaKLM operon coactivator DhaQ (328 aa).

Positions 6–328 constitute a DhaK domain; the sequence is STNEIPEEML…LNVPTGAFAW (323 aa). A Tele-(1,2,3-trihydroxypropan-2-yl)histidine modification is found at His-215.

In terms of assembly, homodimer. Interacts with a homodimer of DhaS.

Its function is as follows. Coactivator for the transcription factor DhaS. The heterotetramer formed by DhaQ and DhaS functions as a transcriptional regulator. Activated by covalent binding of dihydroxyacetone to DhaQ. The complex activates the dhaKLM operon. The chain is DhaKLM operon coactivator DhaQ (dhaQ) from Lactococcus lactis subsp. lactis (strain IL1403) (Streptococcus lactis).